The primary structure comprises 108 residues: UPF0060 membrane protein YE2027 (108 aa).

Helical transmembrane passes span 6–26, 29–49, 59–79, and 85–105; these read LLFFVTALAEIIGCFLPYLWL, GASMWLLLPAAASLALFVWLL, VYAAYGGVYVATALIWLRVVD, and LFDWVGAAVALVGMLIIVAGW.

This sequence belongs to the UPF0060 family.

It is found in the cell inner membrane. The sequence is that of UPF0060 membrane protein YE2027 from Yersinia enterocolitica serotype O:8 / biotype 1B (strain NCTC 13174 / 8081).